Here is a 451-residue protein sequence, read N- to C-terminus: UPF0210 protein APL_1491 (451 aa).

The protein belongs to the UPF0210 family. Homodimer.

The protein is UPF0210 protein APL_1491 of Actinobacillus pleuropneumoniae serotype 5b (strain L20).